A 241-amino-acid polypeptide reads, in one-letter code: Homeobox protein TGIF2LX (241 aa).

Disordered regions lie at residues 1 to 58 (MEAA…GNLP) and 126 to 209 (TGKD…VSPE). Positions 21–39 (AKTQSPAQDTSIMSRNNAD) are enriched in polar residues. A DNA-binding region (homeobox; TALE-type) is located at residues 48-111 (EHKKKRKGNL…INARRRILPD (64 aa)).

Belongs to the TALE/TGIF homeobox family.

Its subcellular location is the nucleus. Functionally, may have a transcription role in testis. The protein is Homeobox protein TGIF2LX (TGIF2LX) of Gorilla gorilla gorilla (Western lowland gorilla).